A 321-amino-acid chain; its full sequence is Ribosomal RNA small subunit methyltransferase H (321 aa).

Residues 40 to 42 (GGH), aspartate 60, phenylalanine 84, aspartate 106, and glutamine 113 each bind S-adenosyl-L-methionine.

It belongs to the methyltransferase superfamily. RsmH family.

Its subcellular location is the cytoplasm. It carries out the reaction cytidine(1402) in 16S rRNA + S-adenosyl-L-methionine = N(4)-methylcytidine(1402) in 16S rRNA + S-adenosyl-L-homocysteine + H(+). Its function is as follows. Specifically methylates the N4 position of cytidine in position 1402 (C1402) of 16S rRNA. This is Ribosomal RNA small subunit methyltransferase H from Haemophilus influenzae (strain PittEE).